We begin with the raw amino-acid sequence, 354 residues long: MELIPNLPDDVARECLLRSSYQQFPVIASVCRAWNREVSLSQFLHQRKASRHSQELLILSQARVDPAGSGKIIATPEYRISVLESGSGLWTELPPIPGQTKGLPLFCRLVSVGSDLIVLGGLDPITWQAHDSVFVFSFLTSKWRVGATMPGVRRSFFGCASDSDRTVLVAGGHNEEKCALTSAMVYDVSEDKWTFLPDMARERDECKAVFHAGRFHVIGGYATEEQGQFSKTAESFDVSTWEWGPLTEDFLDDTGDTVSPPTCVAGGDLYACWGGDVMMFLNDKWQKVGQIPADVYNVTYVAVRPGMLIVIGNGKALAGYGEATVGYICDLSSSRWVKLETHGGHVQAGCFLEV.

Positions 2 to 49 (ELIPNLPDDVARECLLRSSYQQFPVIASVCRAWNREVSLSQFLHQRKA) constitute an F-box domain. 4 Kelch repeats span residues 63–110 (RVDP…CRLV), 115–163 (DLIV…ASDS), 166–213 (TVLV…FHAG), and 215–263 (FHVI…PPTC).

This Arabidopsis thaliana (Mouse-ear cress) protein is F-box/kelch-repeat protein At1g80440.